We begin with the raw amino-acid sequence, 422 residues long: Glutamyl-tRNA reductase (422 aa).

Substrate is bound by residues 49-52, Ser-107, 112-114, and Gln-118; these read TCNR and EPQ. Cys-50 serves as the catalytic Nucleophile. 187 to 192 serves as a coordination point for NADP(+); that stretch reads GAGETI.

Belongs to the glutamyl-tRNA reductase family. As to quaternary structure, homodimer.

The catalysed reaction is (S)-4-amino-5-oxopentanoate + tRNA(Glu) + NADP(+) = L-glutamyl-tRNA(Glu) + NADPH + H(+). It participates in porphyrin-containing compound metabolism; protoporphyrin-IX biosynthesis; 5-aminolevulinate from L-glutamyl-tRNA(Glu): step 1/2. Catalyzes the NADPH-dependent reduction of glutamyl-tRNA(Glu) to glutamate 1-semialdehyde (GSA). This chain is Glutamyl-tRNA reductase, found in Stutzerimonas stutzeri (strain A1501) (Pseudomonas stutzeri).